A 192-amino-acid polypeptide reads, in one-letter code: Protein SHORT HYPOCOTYL IN WHITE LIGHT 1 (192 aa).

Residues 43 to 50 carry the Nuclear localization signal motif; that stretch reads FRRLNRSL. The interval 70–92 is disordered; it reads GGDNYDVVPDDDGFSDDDDEEDE. Acidic residues predominate over residues 77 to 92; that stretch reads VPDDDGFSDDDDEEDE. 2 helical membrane passes run 122–142 and 159–179; these read ILPA…ILLL and GGTV…ASFF.

As to quaternary structure, interacts with HY5 and COP1 in the nucleus. Expressed in young seedlings (e.g. hypocotyl and cotyledons) and in green tissues (e.g. leaves, stems, sepals, and young siliques).

The protein resides in the nucleus membrane. Negative regulator of photomorphogenesis modulating both light and abscisic acid (ABA) signaling pathways. Negatively regulates the light-mediated inhibition of hypocotyl elongation, probably in a PHYB-mediated signaling pathway, but promotes flowering time (especially in long days) and lateral root formation. Enhances light-regulated gene expression. Promotes COP1-mediated degradation of HY5 during seedling development (e.g. hypocotyl growth) through enhanced ubiquitination in the darkness. Also involved in root gravitropism. This is Protein SHORT HYPOCOTYL IN WHITE LIGHT 1 from Arabidopsis thaliana (Mouse-ear cress).